Here is a 712-residue protein sequence, read N- to C-terminus: MGMRIKLQSTNHPNNLLKELNKCRLSETMCDVTIVVGSRSFPAHKAVLACAAGYFQNLFLNTGLDAARTYVVDFITPANFEKVLSFVYTSELFTDLINVGVIYEVAERLGMEDLLQACHSTFPDLESTARAKPLTSTSESHSGTLSCPSAEPAHPLGELRGGGDYLGADRNYVLPSDAGGSYKEEEKNVASDANHSLHLPQPPPPPPKTEDHDTPAPFTSIPSMMTQPLLGTVSTGIQTSTSSCQPYKVQSNGDFSKNSFLTPDNAVDITTGTNSCLSNSEHSKDPGFGQMDELQLEDLGDDDLQFEDPAEDIGTTEEVIELSDDSEDELAFGENDNRENKAMPCQVCKKVLEPNIQLIRQHARDHVDLLTGNCKVCETHFQDRNSRVTHVLSHIGIFLFSCDMCETKFFTQWQLTLHRRDGIFENNIIVHPNDPLPGKLGLFSGAASPELKCAACGKVLAKDFHVVRGHILDHLNLKGQACSVCDQRHLNLCSLMWHTLSHLGISVFSCSVCANSFVDWHLLEKHMAVHQSLEDALFHCRLCSQSFKSEAAYRYHVSQHKCNSGLDARPGFGLQHPALQKRKLPAEEFLGEELALQGQPGNSKYSCKVCGKRFAHTSEFNYHRRIHTGEKPYQCKVCHKFFRGRSTIKCHLKTHSGALMYRCTVCGHYSSTLNLMSKHVGVHKGSLPPDFTIEQTFMYIIHSKEADKNPDS.

In terms of domain architecture, BTB spans 30–96; it reads CDVTIVVGSR…VYTSELFTDL (67 aa). 3 disordered regions span residues 129–162, 176–224, and 236–260; these read ARAK…LRGG, SDAG…IPSM, and GIQT…KNSF. Polar residues predominate over residues 134 to 147; that stretch reads LTSTSESHSGTLSC. Lysine 183 is covalently cross-linked (Glycyl lysine isopeptide (Lys-Gly) (interchain with G-Cter in SUMO2)). The C2H2-type 1 zinc finger occupies 372-394; that stretch reads GNCKVCETHFQDRNSRVTHVLSH. The C2H2-type 2; atypical zinc-finger motif lies at 400–422; it reads FSCDMCETKFFTQWQLTLHRRDG. Lysine 439 participates in a covalent cross-link: Glycyl lysine isopeptide (Lys-Gly) (interchain with G-Cter in SUMO2). Residues 480-502 form a C2H2-type 3; atypical zinc finger; the sequence is QACSVCDQRHLNLCSLMWHTLSH. 4 C2H2-type zinc fingers span residues 508–530, 538–560, 605–627, and 633–655; these read FSCS…MAVH, FHCR…VSQH, YSCK…RRIH, and YQCK…LKTH. The C2H2-type 8; atypical zinc-finger motif lies at 661–683; the sequence is YRCTVCGHYSSTLNLMSKHVGVH.

It belongs to the krueppel C2H2-type zinc-finger protein family.

Its subcellular location is the nucleus. Functionally, may be involved in transcriptional regulation. This is Zinc finger and BTB domain-containing protein 39 (ZBTB39) from Homo sapiens (Human).